Here is a 93-residue protein sequence, read N- to C-terminus: Large ribosomal subunit protein uL23cz/uL23cy (93 aa).

It belongs to the universal ribosomal protein uL23 family. Part of the 50S ribosomal subunit.

The protein localises to the plastid. It localises to the chloroplast. Its function is as follows. Binds to 23S rRNA. This chain is Large ribosomal subunit protein uL23cz/uL23cy (rpl23-A), found in Jasminum nudiflorum (Winter jasmine).